The chain runs to 85 residues: Protein AC4 (85 aa).

Glycine 2 is lipidated: N-myristoyl glycine; by host. Positions 44–63 (RAPMSNPTSRKTGTVSNGDC) are disordered. A compositionally biased stretch (polar residues) spans 46–62 (PMSNPTSRKTGTVSNGD).

The protein belongs to the geminiviridae protein AC4/C4 family.

The protein resides in the host cell membrane. Functionally, pathogenicity determinant. May act as a suppressor of RNA-mediated gene silencing, also known as post-transcriptional gene silencing (PTGS), a mechanism of plant viral defense that limits the accumulation of viral RNAs. This chain is Protein AC4, found in Potato yellow mosaic virus (isolate Venezuela) (PYMV).